The chain runs to 141 residues: Superoxide dismutase [Cu-Zn], chloroplastic (141 aa).

His-33, His-35, and His-50 together coordinate Cu cation. Cys-44 and Cys-133 are oxidised to a cystine. Zn(2+) is bound by residues His-50, His-58, His-67, and Asp-70. Residue His-107 coordinates Cu cation.

The protein belongs to the Cu-Zn superoxide dismutase family. Homotetramer. Cu cation is required as a cofactor. Requires Zn(2+) as cofactor.

Its subcellular location is the plastid. It is found in the chloroplast. The catalysed reaction is 2 superoxide + 2 H(+) = H2O2 + O2. Destroys radicals which are normally produced within the cells and which are toxic to biological systems. In Pinus sylvestris (Scotch pine), this protein is Superoxide dismutase [Cu-Zn], chloroplastic (SODCP).